Reading from the N-terminus, the 44-residue chain is Conotoxin Sr5.5 (44 aa).

A signal peptide spans 1–19 (MRCLPVFVILLLLIASAPS). A propeptide spanning residues 20 to 29 (VDDNAKGTQH) is cleaved from the precursor.

This sequence belongs to the conotoxin T superfamily. Post-translationally, contains 2 disulfide bonds that can be either 'C1-C3, C2-C4' or 'C1-C4, C2-C3', since these disulfide connectivities have been observed for conotoxins with cysteine framework V (for examples, see AC P0DQQ7 and AC P81755). As to expression, expressed by the venom duct.

The protein resides in the secreted. The protein is Conotoxin Sr5.5 of Conus spurius (Alphabet cone).